Consider the following 343-residue polypeptide: Holliday junction branch migration complex subunit RuvB (343 aa).

Positions Thr-4–Tyr-193 are large ATPase domain (RuvB-L). Residues Leu-32, Arg-33, Gly-74, Lys-77, Thr-78, Thr-79, Glu-140 to Tyr-142, Arg-183, Tyr-193, and Arg-230 contribute to the ATP site. Position 78 (Thr-78) interacts with Mg(2+). Residues Glu-194 to Asp-264 are small ATPAse domain (RuvB-S). The head domain (RuvB-H) stretch occupies residues Ala-267 to Lys-343. 2 residues coordinate DNA: Arg-322 and Arg-327.

Belongs to the RuvB family. Homohexamer. Forms an RuvA(8)-RuvB(12)-Holliday junction (HJ) complex. HJ DNA is sandwiched between 2 RuvA tetramers; dsDNA enters through RuvA and exits via RuvB. An RuvB hexamer assembles on each DNA strand where it exits the tetramer. Each RuvB hexamer is contacted by two RuvA subunits (via domain III) on 2 adjacent RuvB subunits; this complex drives branch migration. In the full resolvosome a probable DNA-RuvA(4)-RuvB(12)-RuvC(2) complex forms which resolves the HJ.

It is found in the cytoplasm. The enzyme catalyses ATP + H2O = ADP + phosphate + H(+). The RuvA-RuvB-RuvC complex processes Holliday junction (HJ) DNA during genetic recombination and DNA repair, while the RuvA-RuvB complex plays an important role in the rescue of blocked DNA replication forks via replication fork reversal (RFR). RuvA specifically binds to HJ cruciform DNA, conferring on it an open structure. The RuvB hexamer acts as an ATP-dependent pump, pulling dsDNA into and through the RuvAB complex. RuvB forms 2 homohexamers on either side of HJ DNA bound by 1 or 2 RuvA tetramers; 4 subunits per hexamer contact DNA at a time. Coordinated motions by a converter formed by DNA-disengaged RuvB subunits stimulates ATP hydrolysis and nucleotide exchange. Immobilization of the converter enables RuvB to convert the ATP-contained energy into a lever motion, pulling 2 nucleotides of DNA out of the RuvA tetramer per ATP hydrolyzed, thus driving DNA branch migration. The RuvB motors rotate together with the DNA substrate, which together with the progressing nucleotide cycle form the mechanistic basis for DNA recombination by continuous HJ branch migration. Branch migration allows RuvC to scan DNA until it finds its consensus sequence, where it cleaves and resolves cruciform DNA. This is Holliday junction branch migration complex subunit RuvB from Neisseria gonorrhoeae (strain NCCP11945).